A 226-amino-acid chain; its full sequence is ATP synthase F(0) complex subunit a (226 aa).

6 helical membrane passes run 6–26 (FASFITPTMMGLPIVVTIIMF), 68–88 (WALMIVSLIMFIGSTNLLGLL), 97–117 (QLSMNLSMAIPLWAGAVILGF), 138–158 (IPMLIIIETISLFIQPMALAV), 164–184 (ITAGHLLMHLIGGATLVLMDI), and 189–209 (ATITFIILLLLTVLEFAVALI).

It belongs to the ATPase A chain family. As to quaternary structure, component of the ATP synthase complex composed at least of ATP5F1A/subunit alpha, ATP5F1B/subunit beta, ATP5MC1/subunit c (homooctomer), MT-ATP6/subunit a, MT-ATP8/subunit 8, ATP5ME/subunit e, ATP5MF/subunit f, ATP5MG/subunit g, ATP5MK/subunit k, ATP5MJ/subunit j, ATP5F1C/subunit gamma, ATP5F1D/subunit delta, ATP5F1E/subunit epsilon, ATP5PF/subunit F6, ATP5PB/subunit b, ATP5PD/subunit d, ATP5PO/subunit OSCP. ATP synthase complex consists of a soluble F(1) head domain (subunits alpha(3) and beta(3)) - the catalytic core - and a membrane F(0) domain - the membrane proton channel (subunits c, a, 8, e, f, g, k and j). These two domains are linked by a central stalk (subunits gamma, delta, and epsilon) rotating inside the F1 region and a stationary peripheral stalk (subunits F6, b, d, and OSCP). Interacts with DNAJC30; interaction is direct.

It is found in the mitochondrion inner membrane. It carries out the reaction H(+)(in) = H(+)(out). Subunit a, of the mitochondrial membrane ATP synthase complex (F(1)F(0) ATP synthase or Complex V) that produces ATP from ADP in the presence of a proton gradient across the membrane which is generated by electron transport complexes of the respiratory chain. ATP synthase complex consist of a soluble F(1) head domain - the catalytic core - and a membrane F(1) domain - the membrane proton channel. These two domains are linked by a central stalk rotating inside the F(1) region and a stationary peripheral stalk. During catalysis, ATP synthesis in the catalytic domain of F(1) is coupled via a rotary mechanism of the central stalk subunits to proton translocation. With the subunit c (ATP5MC1), forms the proton-conducting channel in the F(0) domain, that contains two crucial half-channels (inlet and outlet) that facilitate proton movement from the mitochondrial intermembrane space (IMS) into the matrix. Protons are taken up via the inlet half-channel and released through the outlet half-channel, following a Grotthuss mechanism. The protein is ATP synthase F(0) complex subunit a of Rattus norvegicus (Rat).